The sequence spans 162 residues: Iron-sulfur cluster assembly protein IscU (162 aa).

This sequence belongs to the NifU family. Homotrimer. Small proportion is monomeric. Interacts with IscS. Interacts with ABCB6. Component of a complex, at least composed of IscS, Isd11 and IscU. The cofactor is [4Fe-4S] cluster.

It is found in the mitochondrion. The protein operates within cofactor biosynthesis; iron-sulfur cluster biosynthesis. In terms of biological role, participates in iron-sulfur cluster formation (ISC) pathway for iron-sulfur (Fe-S) cluster biogenesis. Plays a role of a major scaffold protein for [Fe-S] assembly; assembles [4Fe-4S] clusters directly upon interaction with the catalytic component IscS-Isd11 as part of the scaffold complex. Can transfer [4Fe-4S] clusters to target apo-proteins. In Plasmodium falciparum (isolate 3D7), this protein is Iron-sulfur cluster assembly protein IscU.